We begin with the raw amino-acid sequence, 418 residues long: F420-non-reducing hydrogenase vhu subunit A (418 aa).

Cys61 and Cys64 together coordinate Ni(2+).

It belongs to the [NiFe]/[NiFeSe] hydrogenase large subunit family. The F420-non-reducing hydrogenase vhu is composed of four subunits; VhuA, VhuD, VhuG and VhuU. The cofactor is Ni(2+).

In Methanocaldococcus jannaschii (strain ATCC 43067 / DSM 2661 / JAL-1 / JCM 10045 / NBRC 100440) (Methanococcus jannaschii), this protein is F420-non-reducing hydrogenase vhu subunit A (vhuA).